Here is a 115-residue protein sequence, read N- to C-terminus: Urease subunit beta (115 aa).

Belongs to the urease beta subunit family. Heterotrimer of UreA (gamma), UreB (beta) and UreC (alpha) subunits. Three heterotrimers associate to form the active enzyme.

The protein resides in the cytoplasm. The catalysed reaction is urea + 2 H2O + H(+) = hydrogencarbonate + 2 NH4(+). Its pathway is nitrogen metabolism; urea degradation; CO(2) and NH(3) from urea (urease route): step 1/1. In Arthrobacter sp. (strain FB24), this protein is Urease subunit beta.